The chain runs to 408 residues: uncharacterized protein (408 aa).

This sequence belongs to the protein kinase superfamily. ADCK protein kinase family.

This is an uncharacterized protein from Synechocystis sp. (strain ATCC 27184 / PCC 6803 / Kazusa).